Here is a 214-residue protein sequence, read N- to C-terminus: Pyrrolidone-carboxylate peptidase (214 aa).

Active-site residues include glutamate 80, cysteine 143, and histidine 166.

The protein belongs to the peptidase C15 family. In terms of assembly, homotetramer.

It localises to the cytoplasm. It carries out the reaction Release of an N-terminal pyroglutamyl group from a polypeptide, the second amino acid generally not being Pro.. Removes 5-oxoproline from various penultimate amino acid residues except L-proline. The polypeptide is Pyrrolidone-carboxylate peptidase (Klebsiella pneumoniae (strain 342)).